A 502-amino-acid chain; its full sequence is Glycerol kinase (502 aa).

T14 serves as a coordination point for ADP. ATP-binding residues include T14, T15, and S16. T14 lines the sn-glycerol 3-phosphate pocket. R18 is an ADP binding site. 4 residues coordinate sn-glycerol 3-phosphate: R84, E85, Y136, and D246. Glycerol-binding residues include R84, E85, Y136, D246, and Q247. ADP contacts are provided by T268 and G311. 4 residues coordinate ATP: T268, G311, Q315, and G412. Residues G412 and N416 each coordinate ADP.

Belongs to the FGGY kinase family. Homotetramer and homodimer (in equilibrium). Heterodimer with EIIA-Glc. Binds 1 zinc ion per glycerol kinase EIIA-Glc dimer. The zinc ion is important for dimerization.

The catalysed reaction is glycerol + ATP = sn-glycerol 3-phosphate + ADP + H(+). Its pathway is polyol metabolism; glycerol degradation via glycerol kinase pathway; sn-glycerol 3-phosphate from glycerol: step 1/1. Its activity is regulated as follows. Activity of this regulatory enzyme is affected by several metabolites. Allosterically and non-competitively inhibited by fructose 1,6-bisphosphate (FBP) and unphosphorylated phosphocarrier protein EIIA-Glc (III-Glc), an integral component of the bacterial phosphotransferase (PTS) system. Functionally, key enzyme in the regulation of glycerol uptake and metabolism. Catalyzes the phosphorylation of glycerol to yield sn-glycerol 3-phosphate. The protein is Glycerol kinase of Escherichia coli O81 (strain ED1a).